A 488-amino-acid polypeptide reads, in one-letter code: Diacylglycerol kinase 3 (488 aa).

The segment at 1–24 (MDSPVSKTDASKEKFVASRPSTAD) is disordered. A DAGKc domain is found at 87 to 245 (APHAPMVVFI…SWKILVSMPS (159 aa)).

It belongs to the eukaryotic diacylglycerol kinase family. Monomer.

The catalysed reaction is a 1,2-diacyl-sn-glycerol + ATP = a 1,2-diacyl-sn-glycero-3-phosphate + ADP + H(+). In terms of biological role, phosphorylates the second messenger diacylglycerol (DAG) to generate phosphatidic acid (PA), another important signaling molecule. PA is required for plant development and responses to abiotic stress and pathogen attack. May be involved in the accumulation of PA during cold stress. The chain is Diacylglycerol kinase 3 (DGK3) from Arabidopsis thaliana (Mouse-ear cress).